A 312-amino-acid chain; its full sequence is Formimidoylglutamase (312 aa).

Mn(2+) contacts are provided by His128, Asp153, His155, Asp157, Asp240, and Asp242.

Belongs to the arginase family. The cofactor is Mn(2+).

It catalyses the reaction N-formimidoyl-L-glutamate + H2O = formamide + L-glutamate. It participates in amino-acid degradation; L-histidine degradation into L-glutamate; L-glutamate from N-formimidoyl-L-glutamate (hydrolase route): step 1/1. Functionally, catalyzes the conversion of N-formimidoyl-L-glutamate to L-glutamate and formamide. The chain is Formimidoylglutamase from Enterobacter sp. (strain 638).